Here is a 291-residue protein sequence, read N- to C-terminus: Tumor necrosis factor ligand superfamily member 10 (291 aa).

Over M1 to R17 the chain is Cytoplasmic. Residues M18–T38 form a helical; Signal-anchor for type II membrane protein membrane-spanning segment. Residues Y39–N291 lie on the Extracellular side of the membrane. A glycan (N-linked (GlcNAc...) asparagine) is linked at N52. The THD domain maps to V126 to I290. C240 serves as a coordination point for Zn(2+).

It belongs to the tumor necrosis factor family. As to quaternary structure, homotrimer. One TNFSF10 homotrimer interacts with three TNFSF10A mononers. One TNFSF10 homotrimer interacts with three TNFSF10B mononers. In terms of processing, tyrosine phosphorylated by PKDCC/VLK. Widespread.

It is found in the cell membrane. Its subcellular location is the secreted. Its function is as follows. Cytokine that binds to TNFRSF10A/TRAILR1, TNFRSF10B/TRAILR2, TNFRSF10C/TRAILR3, TNFRSF10D/TRAILR4 and possibly also to TNFRSF11B/OPG. Induces apoptosis. Its activity may be modulated by binding to the decoy receptors TNFRSF10C/TRAILR3, TNFRSF10D/TRAILR4 and TNFRSF11B/OPG that cannot induce apoptosis. This chain is Tumor necrosis factor ligand superfamily member 10 (Tnfsf10), found in Mus musculus (Mouse).